The chain runs to 280 residues: UPF0758 protein Atu1607 (280 aa).

The disordered stretch occupies residues 1-22; sequence MAKRPALPSADLSPTSGFEAGE. Positions 158–280 constitute an MPN domain; that stretch reads VLGSWSSVID…HASFKGLRLI (123 aa). Residues H229, H231, and D242 each coordinate Zn(2+). Residues 229 to 242 carry the JAMM motif motif; sequence HNHPSGDPTPSRAD.

The protein belongs to the UPF0758 family.

This is UPF0758 protein Atu1607 from Agrobacterium fabrum (strain C58 / ATCC 33970) (Agrobacterium tumefaciens (strain C58)).